Reading from the N-terminus, the 148-residue chain is Extracellular globin-2B (148 aa).

The Globin domain occupies 3–148 (CCSAADRHEV…IADVIKAELP (146 aa)). C4 and C135 form a disulfide bridge. Residue H98 coordinates heme b.

Belongs to the globin family. Disulfide bonded trimer of chains IIA, IIB, and IIC.

The protein localises to the secreted. The polypeptide is Extracellular globin-2B (Tylorrhynchus heterochetus (Japanese palolo worm)).